The primary structure comprises 149 residues: Hut operon positive regulatory protein (149 aa).

The protein belongs to the HutP family. As to quaternary structure, homohexamer.

Antiterminator that binds to cis-acting regulatory sequences on the mRNA in the presence of histidine, thereby suppressing transcription termination and activating the hut operon for histidine utilization. The sequence is that of Hut operon positive regulatory protein from Geobacillus sp. (strain WCH70).